Here is a 142-residue protein sequence, read N- to C-terminus: Hemoglobin subunit alpha-I/II (142 aa).

The region spanning 2-142 (VLSAADKGNV…VSTVLTSKYR (141 aa)) is the Globin domain. Position 4 is a phosphoserine (Ser-4). Lys-8 and Lys-12 each carry N6-succinyllysine. Lys-17 carries the N6-acetyllysine; alternate modification. At Lys-17 the chain carries N6-succinyllysine; alternate. Tyr-25 is modified (phosphotyrosine). Ser-36 is modified (phosphoserine). Residue Lys-41 is modified to N6-succinyllysine. Ser-50 carries the phosphoserine modification. His-59 contributes to the O2 binding site. His-88 contacts heme b. Residue Ser-103 is modified to Phosphoserine. At Thr-109 the chain carries Phosphothreonine. Ser-125 carries the phosphoserine modification. 2 positions are modified to phosphothreonine: Thr-135 and Thr-138. Ser-139 carries the post-translational modification Phosphoserine.

It belongs to the globin family. Heterotetramer of two alpha chains and two beta chains. Red blood cells.

Involved in oxygen transport from the lung to the various peripheral tissues. This Bison bonasus (European bison) protein is Hemoglobin subunit alpha-I/II.